A 67-amino-acid chain; its full sequence is Beta-defensin 123 (67 aa).

Residues 1 to 20 (MKLLLLTLTVLLLLSQLTPG) form the signal peptide. Disulfide bonds link cysteine 25/cysteine 52, cysteine 32/cysteine 46, and cysteine 36/cysteine 53.

It belongs to the beta-defensin family.

It is found in the secreted. Functionally, has antibacterial activity. The chain is Beta-defensin 123 (DEFB123) from Pongo pygmaeus (Bornean orangutan).